The chain runs to 350 residues: Small ribosomal subunit biogenesis GTPase RsgA (350 aa).

Residues 1 to 17 (MSKNKLSKGQQRRVNAN) show a composition bias toward polar residues. The segment at 1-33 (MSKNKLSKGQQRRVNANHQRRLKTSKEKPDYDD) is disordered. Residues 104-273 (TSVLTRPDFY…VIDSPGVREF (170 aa)) enclose the CP-type G domain. Residues 160–163 (NKID) and 214–222 (GQSGVGKSS) contribute to the GTP site. 4 residues coordinate Zn(2+): Cys297, Cys302, His304, and Cys310.

This sequence belongs to the TRAFAC class YlqF/YawG GTPase family. RsgA subfamily. Monomer. Associates with 30S ribosomal subunit, binds 16S rRNA. Zn(2+) is required as a cofactor.

The protein localises to the cytoplasm. One of several proteins that assist in the late maturation steps of the functional core of the 30S ribosomal subunit. Helps release RbfA from mature subunits. May play a role in the assembly of ribosomal proteins into the subunit. Circularly permuted GTPase that catalyzes slow GTP hydrolysis, GTPase activity is stimulated by the 30S ribosomal subunit. This is Small ribosomal subunit biogenesis GTPase RsgA from Shigella boydii serotype 18 (strain CDC 3083-94 / BS512).